Reading from the N-terminus, the 250-residue chain is MRIDLNCDLGEAFGNYSFGGDNQIIPLITSANIACGFHAGDENVMYDTIKLVKDNGVGIGAHPGLPDLKGFGRRNMDITPKEIYNLVVYQLGALDGFCKVHQTRINHVKPHGALYNMGAKDKNIAHAIAQAVYDFDSSLILVGLSNTLLITEAESLGLRTASEVFADRRYEDNGQLVSRKEADAVITNTEEALDQVLKMVIENKVVSKNGKEIDLKADTICVHGDGAHALEFVSQIREKLTKEGIDIQSL.

It belongs to the LamB/PxpA family. Forms a complex composed of PxpA, PxpB and PxpC.

It catalyses the reaction 5-oxo-L-proline + ATP + 2 H2O = L-glutamate + ADP + phosphate + H(+). Functionally, catalyzes the cleavage of 5-oxoproline to form L-glutamate coupled to the hydrolysis of ATP to ADP and inorganic phosphate. This chain is 5-oxoprolinase subunit A, found in Staphylococcus haemolyticus (strain JCSC1435).